The sequence spans 446 residues: tRNA-2-methylthio-N(6)-dimethylallyladenosine synthase (446 aa).

The MTTase N-terminal domain occupies 2 to 122; sequence KKAYVKSYGC…LPDLLRQSRE (121 aa). Residues cysteine 11, cysteine 47, cysteine 85, cysteine 157, cysteine 161, and cysteine 164 each contribute to the [4Fe-4S] cluster site. Residues 143–375 form the Radical SAM core domain; it reads RNRGVTGFLT…QQLLDQQRHA (233 aa). Residues 378–440 form the TRAM domain; that stretch reads AAAVGTVAEI…SNSLFGEVLE (63 aa).

Belongs to the methylthiotransferase family. MiaB subfamily. As to quaternary structure, monomer. The cofactor is [4Fe-4S] cluster.

The protein localises to the cytoplasm. The catalysed reaction is N(6)-dimethylallyladenosine(37) in tRNA + (sulfur carrier)-SH + AH2 + 2 S-adenosyl-L-methionine = 2-methylsulfanyl-N(6)-dimethylallyladenosine(37) in tRNA + (sulfur carrier)-H + 5'-deoxyadenosine + L-methionine + A + S-adenosyl-L-homocysteine + 2 H(+). Its function is as follows. Catalyzes the methylthiolation of N6-(dimethylallyl)adenosine (i(6)A), leading to the formation of 2-methylthio-N6-(dimethylallyl)adenosine (ms(2)i(6)A) at position 37 in tRNAs that read codons beginning with uridine. This chain is tRNA-2-methylthio-N(6)-dimethylallyladenosine synthase, found in Methylorubrum populi (strain ATCC BAA-705 / NCIMB 13946 / BJ001) (Methylobacterium populi).